The following is a 417-amino-acid chain: Alpha-galactosidase (417 aa).

An N-terminal signal peptide occupies residues methionine 1–alanine 55. Residues tryptophan 71, aspartate 106, aspartate 107, cysteine 156, lysine 183, aspartate 185, tryptophan 219, arginine 236, and aspartate 240 each contribute to the alpha-D-galactose site. Intrachain disulfides connect cysteine 76-cysteine 108 and cysteine 156-cysteine 187. Aspartate 185 serves as the catalytic Nucleophile. Aspartate 240 functions as the Proton donor in the catalytic mechanism.

The protein belongs to the glycosyl hydrolase 27 family.

The enzyme catalyses Hydrolysis of terminal, non-reducing alpha-D-galactose residues in alpha-D-galactosides, including galactose oligosaccharides, galactomannans and galactolipids.. The catalysed reaction is melibiose + H2O = D-galactose + D-glucose. It catalyses the reaction raffinose + H2O = sucrose + D-galactose. It carries out the reaction stachyose + H2O = raffinose + D-galactose. The enzyme catalyses alpha-D-Gal-(1-&gt;6)-beta-D-Man-(1-&gt;4)-beta-D-Man-(1-&gt;4)-D-Man + H2O = beta-D-Man-(1-&gt;4)-beta-D-Man-(1-&gt;4)-D-Man + D-galactose. The catalysed reaction is beta-D-Man-(1-&gt;4)-[alpha-D-Gal-(1-&gt;6)]-beta-D-Man-(1-&gt;4)-beta-D-Man-(1-&gt;4)-D-Man + H2O = beta-D-Man-(1-&gt;4)-beta-D-Man-(1-&gt;4)-beta-D-Man-(1-&gt;4)-D-Man + D-galactose. With respect to regulation, 1 mM Hg(2+) and Ag(2+) decrease activity by 98% and 96%, respectively. 1 mM Para-chloromercuribenzoic acid (PCMB) completely inhibits enzymatic activity. Functionally, hydrolyzes melibiose, raffinose and stachyose in the following decreasing order of reactivity: raffinose, melibiose, stachyose. Acts on both the terminal alpha-galactosyl residue and the side-chain alpha-galactosyl residue of the galactomanno-oligosaccharides. The sequence is that of Alpha-galactosidase from Oryza sativa subsp. japonica (Rice).